Consider the following 121-residue polypeptide: Small ribosomal subunit protein uS13 (121 aa).

The tract at residues R93–K121 is disordered.

It belongs to the universal ribosomal protein uS13 family. Part of the 30S ribosomal subunit. Forms a loose heterodimer with protein S19. Forms two bridges to the 50S subunit in the 70S ribosome.

In terms of biological role, located at the top of the head of the 30S subunit, it contacts several helices of the 16S rRNA. In the 70S ribosome it contacts the 23S rRNA (bridge B1a) and protein L5 of the 50S subunit (bridge B1b), connecting the 2 subunits; these bridges are implicated in subunit movement. Contacts the tRNAs in the A and P-sites. This is Small ribosomal subunit protein uS13 from Methylibium petroleiphilum (strain ATCC BAA-1232 / LMG 22953 / PM1).